The following is a 564-amino-acid chain: Dihydroxy-acid dehydratase (564 aa).

Residue Cys53 participates in [2Fe-2S] cluster binding. Residue Asp85 participates in Mg(2+) binding. Cys126 contributes to the [2Fe-2S] cluster binding site. Asp127 and Lys128 together coordinate Mg(2+). Position 128 is an N6-carboxylysine (Lys128). Position 203 (Cys203) interacts with [2Fe-2S] cluster. A Mg(2+)-binding site is contributed by Glu454. Residue Ser480 is the Proton acceptor of the active site.

The protein belongs to the IlvD/Edd family. In terms of assembly, homodimer. It depends on [2Fe-2S] cluster as a cofactor. Mg(2+) serves as cofactor.

The catalysed reaction is (2R)-2,3-dihydroxy-3-methylbutanoate = 3-methyl-2-oxobutanoate + H2O. It catalyses the reaction (2R,3R)-2,3-dihydroxy-3-methylpentanoate = (S)-3-methyl-2-oxopentanoate + H2O. It functions in the pathway amino-acid biosynthesis; L-isoleucine biosynthesis; L-isoleucine from 2-oxobutanoate: step 3/4. It participates in amino-acid biosynthesis; L-valine biosynthesis; L-valine from pyruvate: step 3/4. Functionally, functions in the biosynthesis of branched-chain amino acids. Catalyzes the dehydration of (2R,3R)-2,3-dihydroxy-3-methylpentanoate (2,3-dihydroxy-3-methylvalerate) into 2-oxo-3-methylpentanoate (2-oxo-3-methylvalerate) and of (2R)-2,3-dihydroxy-3-methylbutanoate (2,3-dihydroxyisovalerate) into 2-oxo-3-methylbutanoate (2-oxoisovalerate), the penultimate precursor to L-isoleucine and L-valine, respectively. This is Dihydroxy-acid dehydratase from Clavibacter michiganensis subsp. michiganensis (strain NCPPB 382).